A 314-amino-acid chain; its full sequence is UDP-3-O-acyl-N-acetylglucosamine deacetylase (314 aa).

Zn(2+) contacts are provided by His-82, His-239, and Asp-243. His-266 serves as the catalytic Proton donor.

Belongs to the LpxC family. Zn(2+) is required as a cofactor.

It catalyses the reaction a UDP-3-O-[(3R)-3-hydroxyacyl]-N-acetyl-alpha-D-glucosamine + H2O = a UDP-3-O-[(3R)-3-hydroxyacyl]-alpha-D-glucosamine + acetate. It functions in the pathway glycolipid biosynthesis; lipid IV(A) biosynthesis; lipid IV(A) from (3R)-3-hydroxytetradecanoyl-[acyl-carrier-protein] and UDP-N-acetyl-alpha-D-glucosamine: step 2/6. Functionally, catalyzes the hydrolysis of UDP-3-O-myristoyl-N-acetylglucosamine to form UDP-3-O-myristoylglucosamine and acetate, the committed step in lipid A biosynthesis. This is UDP-3-O-acyl-N-acetylglucosamine deacetylase from Myxococcus xanthus (strain DK1622).